Reading from the N-terminus, the 321-residue chain is MVTVLDAIANAPRLRHPEKAHKPDQEVLRKPDWIRVKAPVSKGYAETREIVKSHKLVTVCEEAGCPNIGECWEKKHATFMIMGEICTRACAFCNVATGIPTALDPDEPARVAHAVKQMGLSHVVITSVDRDDLADGGAQHFADVIRAIRAATPSTTIEILTPDFLRKDGALEIVVAARPDVFNHNLETVPSNYLKVRPGARYFHSIRLLQRVKELDPSIFTKSGIMVGLGEERNEILQLMDDLRSANVDFMTIGQYLQPSKKHHPVIRFVTPEEFKSFETIGRTKGFLLVASSPLTRSSHHAGDDFARLRAAREAQLQKSV.

The [4Fe-4S] cluster site is built by cysteine 60, cysteine 65, cysteine 71, cysteine 86, cysteine 90, cysteine 93, and serine 299. Positions 72–288 (WEKKHATFMI…ETIGRTKGFL (217 aa)) constitute a Radical SAM core domain.

It belongs to the radical SAM superfamily. Lipoyl synthase family. It depends on [4Fe-4S] cluster as a cofactor.

It localises to the cytoplasm. It catalyses the reaction [[Fe-S] cluster scaffold protein carrying a second [4Fe-4S](2+) cluster] + N(6)-octanoyl-L-lysyl-[protein] + 2 oxidized [2Fe-2S]-[ferredoxin] + 2 S-adenosyl-L-methionine + 4 H(+) = [[Fe-S] cluster scaffold protein] + N(6)-[(R)-dihydrolipoyl]-L-lysyl-[protein] + 4 Fe(3+) + 2 hydrogen sulfide + 2 5'-deoxyadenosine + 2 L-methionine + 2 reduced [2Fe-2S]-[ferredoxin]. The protein operates within protein modification; protein lipoylation via endogenous pathway; protein N(6)-(lipoyl)lysine from octanoyl-[acyl-carrier-protein]: step 2/2. Catalyzes the radical-mediated insertion of two sulfur atoms into the C-6 and C-8 positions of the octanoyl moiety bound to the lipoyl domains of lipoate-dependent enzymes, thereby converting the octanoylated domains into lipoylated derivatives. The sequence is that of Lipoyl synthase from Mesorhizobium japonicum (strain LMG 29417 / CECT 9101 / MAFF 303099) (Mesorhizobium loti (strain MAFF 303099)).